The primary structure comprises 397 residues: G2/mitotic-specific cyclin-B2 (397 aa).

Disordered stretches follow at residues 1–20 (MALLRRPTVSSDLKNIDTGV) and 64–97 (KVTHVNKQPKPTASVKPVQMETLAPKDPPAPEDV). Position 8 is a phosphothreonine (T8). S11 carries the phosphoserine modification. Polar residues predominate over residues 64–74 (KVTHVNKQPKP). 3 positions are modified to phosphoserine: S77, S98, and S391.

Belongs to the cyclin family. Cyclin AB subfamily. In terms of assembly, interacts with the CDK1 protein kinase to form a serine/threonine kinase holoenzyme complex also known as maturation promoting factor (MPF). The cyclin subunit imparts substrate specificity to the complex.

Essential for the control of the cell cycle at the G2/M (mitosis) transition. The sequence is that of G2/mitotic-specific cyclin-B2 (CCNB2) from Mesocricetus auratus (Golden hamster).